Reading from the N-terminus, the 120-residue chain is BolA-like protein 2 (120 aa).

It belongs to the BolA/IbaG family. As to quaternary structure, interacts with FRA1, GRX3 and GRX4.

It localises to the cytoplasm. It is found in the nucleus. Involved in the regulation of the iron regulon in response to decreased mitochondrial iron-sulfur cluster synthesis. May be involved in mitochondrial organization and biogenesis. This Saccharomyces cerevisiae (strain ATCC 204508 / S288c) (Baker's yeast) protein is BolA-like protein 2 (BOL2).